Here is a 372-residue protein sequence, read N- to C-terminus: Protein phosphatase 1 regulatory subunit 42 (372 aa).

LRR repeat units follow at residues 30-51 (RITHLNFSNKNIDEVEDLTMCR), 52-71 (NLTVLYLYDNNINQIKNLGS), 72-93 (NLTHLYLQNNCISCIENLSGLK), 94-115 (RLEKLYLGGNCLTVVEGLEGLR), 116-137 (ELRELHIENQRLPPGEKLLFDP), 146-167 (SLSVLNISNNNIDELKDLAVLE), and 168-189 (NLTQFVAADNQLKEIKDLEFVL). An LRRCT domain is found at 203-241 (NPVCLKPKYREKVTIISKTLEILDGKEIKEMARQFLLNW).

It is found in the cytoplasm. The protein localises to the cytoskeleton. It localises to the microtubule organizing center. Its subcellular location is the centrosome. Functionally, may regulate phosphatase activity of protein phosphatase 1 (PP1) complexes. The polypeptide is Protein phosphatase 1 regulatory subunit 42 (ppp1r42) (Xenopus laevis (African clawed frog)).